Here is a 350-residue protein sequence, read N- to C-terminus: Renin receptor (350 aa).

An N-terminal signal peptide occupies residues methionine 1 to glycine 17. Over asparagine 18–glutamate 302 the chain is Extracellular. The chain crosses the membrane as a helical span at residues tyrosine 303–isoleucine 323. At threonine 324 to aspartate 350 the chain is on the cytoplasmic side. Residues lysine 346–aspartate 350 carry the Mediates retrograde transport to the ER motif.

As to quaternary structure, interacts with renin. Accessory component of the multisubunit proton-transporting vacuolar (V)-ATPase protein pump. Interacts (via N-terminus) with ATP6AP1 (via N-terminus). Interacts with ATP6V0D1; ATP6V0D1 is a V-ATPase complex subunit and the interaction promotes V-ATPase complex assembly. Interacts with TMEM9; TMEM9 is a V-ATPase assembly regulator and the interaction induces the interaction with ATP6V0D1. Interacts with VMA21 (via N-terminus); VMA21 is a V-ATPase accessory component. Post-translationally, phosphorylated. In terms of processing, proteolytically cleaved by a furin-like convertase in the trans-Golgi network to generate N- and C-terminal fragments. Expressed in glutamatergic and GABAergic neurons with highest levels in the cortex, the hippocampus, the medial habenular nucleus, the cerebellum, the medulla and the olfactory bulb (at protein level).

Its subcellular location is the endoplasmic reticulum membrane. It is found in the lysosome membrane. The protein resides in the cytoplasmic vesicle. It localises to the autophagosome membrane. The protein localises to the cell projection. Its subcellular location is the dendritic spine membrane. It is found in the axon. The protein resides in the endosome membrane. It localises to the clathrin-coated vesicle membrane. The protein localises to the secretory vesicle. Its subcellular location is the synaptic vesicle membrane. Functionally, multifunctional protein which functions as a renin, prorenin cellular receptor and is involved in the assembly of the lysosomal proton-transporting V-type ATPase (V-ATPase) and the acidification of the endo-lysosomal system. May mediate renin-dependent cellular responses by activating ERK1 and ERK2. By increasing the catalytic efficiency of renin in AGT/angiotensinogen conversion to angiotensin I, may also play a role in the renin-angiotensin system (RAS). Through its function in V-type ATPase (v-ATPase) assembly and acidification of the lysosome it regulates protein degradation and may control different signaling pathways important for proper brain development, synapse morphology and synaptic transmission. In Mus musculus (Mouse), this protein is Renin receptor.